Here is a 250-residue protein sequence, read N- to C-terminus: Small ribosomal subunit protein uS2 (250 aa).

The segment at 225 to 250 (GAQGGRQARGEDLGAAVEAPSEDALA) is disordered.

Belongs to the universal ribosomal protein uS2 family.

The protein is Small ribosomal subunit protein uS2 of Rhizorhabdus wittichii (strain DSM 6014 / CCUG 31198 / JCM 15750 / NBRC 105917 / EY 4224 / RW1) (Sphingomonas wittichii).